A 312-amino-acid chain; its full sequence is Olfactory receptor 5J2 (312 aa).

The Extracellular segment spans residues 1-25 (MADDNFTVVTEFILLGLTDHAELKA). Residue asparagine 5 is glycosylated (N-linked (GlcNAc...) asparagine). A helical transmembrane segment spans residues 26–46 (VLFVVFLVIYAITLLRNLGMI). At 47 to 54 (LLIQITSK) the chain is on the cytoplasmic side. A helical membrane pass occupies residues 55-75 (LHTPMYFLLSCLSFVDACYSS). Topologically, residues 76 to 99 (AIAPKMLVNLLVVKATISFSACMV) are extracellular. The cysteines at positions 97 and 189 are disulfide-linked. A helical transmembrane segment spans residues 100-120 (QHLCFGVFITTEGFLLSVMAY). Residues 121–139 (DRYVAIVSPLLYTVAMSDR) are Cytoplasmic-facing. Residues 140 to 160 (KCVELVTGSWIGGIVNTLIHT) traverse the membrane as a helical segment. At 161 to 196 (ISLRRLSFCRLNAVSHFFCDIPSLLKLSCSDTSMNE) the chain is on the extracellular side. Residues 197–217 (LLLLTFSGVIAMATFLTVIIS) form a helical membrane-spanning segment. Residues 218-237 (YIFIAFASLRIHSASGRQQA) are Cytoplasmic-facing. The helical transmembrane segment at 238 to 258 (FSTCASHLTAVTIFYGTLIFS) threads the bilayer. At 259–271 (YIQPSSQYFVEQE) the chain is on the extracellular side. The helical transmembrane segment at 272 to 292 (KVVSMFYTLGIPMLNLLIHSL) threads the bilayer. At 293 to 312 (RNKDVKEAVKRAIEMKHFLC) the chain is on the cytoplasmic side.

It belongs to the G-protein coupled receptor 1 family.

The protein resides in the cell membrane. Its function is as follows. Odorant receptor. This is Olfactory receptor 5J2 (OR5J2) from Homo sapiens (Human).